Consider the following 147-residue polypeptide: Proteinase inhibitor type-2 T (147 aa).

Positions 1–25 (MAVHKEVSFVAYLLIVLGMFLYVDA) are cleaved as a signal peptide. Repeat copies occupy residues 25–82 (ALGC…PKNP) and 83–142 (KACP…EPKP). Cystine bridges form between cysteine 28–cysteine 116, cysteine 32–cysteine 112, cysteine 40–cysteine 122, cysteine 52–cysteine 89, cysteine 55–cysteine 73, cysteine 56–cysteine 85, cysteine 62–cysteine 98, and cysteine 115–cysteine 133.

It belongs to the protease inhibitor I20 (potato type II proteinase inhibitor) family.

Its function is as follows. Inhibitor of trypsin and chymotrypsin. This is Proteinase inhibitor type-2 T (PIN2T) from Solanum tuberosum (Potato).